A 152-amino-acid polypeptide reads, in one-letter code: Cytochrome c-type biogenesis protein CcmE 2 (152 aa).

The Cytoplasmic segment spans residues M1–R8. Residues L9–A29 form a helical; Signal-anchor for type II membrane protein membrane-spanning segment. Over L30–Q152 the chain is Periplasmic. Heme-binding residues include H123 and Y127.

Belongs to the CcmE/CycJ family.

The protein resides in the cell inner membrane. Heme chaperone required for the biogenesis of c-type cytochromes. Transiently binds heme delivered by CcmC and transfers the heme to apo-cytochromes in a process facilitated by CcmF and CcmH. The polypeptide is Cytochrome c-type biogenesis protein CcmE 2 (Xanthomonas campestris pv. campestris (strain 8004)).